Here is a 440-residue protein sequence, read N- to C-terminus: MEAVIKVISSACKTYCGKTSPSKKEIGAMLSLLQKEGLLMSPSDLYSPRSWDPITAALTQRAMELGKSGELKTWGLVLGALEAAREEQEQVTSEQAKFWLGLGGGRVSPPGPECIEKPATERRIDKGEEVGETTVQRDAKMAPEETATPKTVGTSCYYCGAAIGCNCATASAPPPPYVGSGLYPSLAGVGEQQGQGGDTPRGAEQPRAGRGAGHRGLRRPAGRGQRVRPAGGAALMAGQFDSEDRGSWYWGRLSRGDAVSLLQGQRHGTFLVRDSGSIPGDFVLSVSESSRVSHYIVNSLGPAGGRRAGGEGPGAPGLNPTRFLIGDQVFDSLPSLLEFYKIHYLDTTTLIEPVSRSRQNSGVILRQEEVEYVRALFDFKGNDDGDLPFKKGDILKIRDKPEEQWWNAEDMDGKRGMIPVPYVEKCRPSSASVSTLTGGR.

A gag first part region spans residues 1 to 208 (MEAVIKVISS…TPRGAEQPRA (208 aa)). The PPXY motif motif lies at 174 to 177 (PPPY). The interval 183-230 (YPSLAGVGEQQGQGGDTPRGAEQPRAGRGAGHRGLRRPAGRGQRVRPA) is disordered. Residues 209–437 (GRGAGHRGLR…PSSASVSTLT (229 aa)) form a CRK region. Over residues 212 to 221 (AGHRGLRRPA) the composition is skewed to basic residues. Residues 248 to 354 (WYWGRLSRGD…LDTTTLIEPV (107 aa)) enclose the SH2 domain. Residues 368–428 (EEVEYVRALF…PVPYVEKCRP (61 aa)) enclose the SH3 domain. The segment at 438–440 (GGR) is gag second part.

The polypeptide is P47(GAG-CRK) protein (Avian sarcoma virus CT10 (Avian sarcoma virus (strain CT10))).